The sequence spans 262 residues: tRNA pseudouridine synthase B (262 aa).

The Nucleophile role is filled by aspartate 77.

It belongs to the pseudouridine synthase TruB family. Type 1 subfamily.

The catalysed reaction is uridine(55) in tRNA = pseudouridine(55) in tRNA. Responsible for synthesis of pseudouridine from uracil-55 in the psi GC loop of transfer RNAs. The sequence is that of tRNA pseudouridine synthase B from Protochlamydia amoebophila (strain UWE25).